Consider the following 254-residue polypeptide: Ribosomal RNA small subunit methyltransferase G (254 aa).

Residues 84–109 are insert; sequence NTESKTSLNNAETKNTNEALLTSEPF. S-adenosyl-L-methionine is bound by residues Gly-115, Phe-120, 171-172, and Arg-185; that span reads AE.

The protein belongs to the methyltransferase superfamily. RNA methyltransferase RsmG family.

Its subcellular location is the cytoplasm. Functionally, specifically methylates the N7 position of a guanine in 16S rRNA. The protein is Ribosomal RNA small subunit methyltransferase G of Treponema denticola (strain ATCC 35405 / DSM 14222 / CIP 103919 / JCM 8153 / KCTC 15104).